Reading from the N-terminus, the 338-residue chain is Formamidase (338 aa).

Residues 14 to 257 form the CN hydrolase domain; the sequence is VGIGLVQLQL…NEIITAEVRP (244 aa). The active-site Proton acceptor is Glu60. Lys129 acts as the Proton donor in catalysis. Cys162 acts as the Nucleophile in catalysis.

It belongs to the carbon-nitrogen hydrolase superfamily. Aliphatic amidase family.

The catalysed reaction is formamide + H2O = formate + NH4(+). Functionally, is an aliphatic amidase with a restricted substrate specificity, as it only hydrolyzes formamide. This chain is Formamidase, found in Allorhizobium ampelinum (strain ATCC BAA-846 / DSM 112012 / S4) (Agrobacterium vitis (strain S4)).